Consider the following 199-residue polypeptide: Molybdenum cofactor guanylyltransferase (199 aa).

Residues 12-14 (LAG), K25, N53, D71, and D101 each bind GTP. Mg(2+) is bound at residue D101.

It belongs to the MobA family. In terms of assembly, monomer. It depends on Mg(2+) as a cofactor.

Its subcellular location is the cytoplasm. It carries out the reaction Mo-molybdopterin + GTP + H(+) = Mo-molybdopterin guanine dinucleotide + diphosphate. Its function is as follows. Transfers a GMP moiety from GTP to Mo-molybdopterin (Mo-MPT) cofactor (Moco or molybdenum cofactor) to form Mo-molybdopterin guanine dinucleotide (Mo-MGD) cofactor. The polypeptide is Molybdenum cofactor guanylyltransferase (Polynucleobacter asymbioticus (strain DSM 18221 / CIP 109841 / QLW-P1DMWA-1) (Polynucleobacter necessarius subsp. asymbioticus)).